The primary structure comprises 93 residues: Mitochondrial import inner membrane translocase subunit Tim10-A (93 aa).

The short motif at 32–57 is the Twin CX3C motif element; it reads CHKKCVPPHYKEAELSKGESVCLDRC. Disulfide bonds link Cys32–Cys57 and Cys36–Cys53.

It belongs to the small Tim family. As to quaternary structure, heterohexamer; composed of 3 copies of TIMM9 and 3 copies of TIMM10/TIM10A, named soluble 70 kDa complex. The complex forms a 6-bladed alpha-propeller structure and associates with the TIMM22 component of the TIM22 complex. Interacts with multi-pass transmembrane proteins in transit.

The protein resides in the mitochondrion inner membrane. In terms of biological role, mitochondrial intermembrane chaperone that participates in the import and insertion of multi-pass transmembrane proteins into the mitochondrial inner membrane. May also be required for the transfer of beta-barrel precursors from the TOM complex to the sorting and assembly machinery (SAM complex) of the outer membrane. Acts as a chaperone-like protein that protects the hydrophobic precursors from aggregation and guide them through the mitochondrial intermembrane space. In Xenopus laevis (African clawed frog), this protein is Mitochondrial import inner membrane translocase subunit Tim10-A (timm10-a).